The following is a 1057-amino-acid chain: DNA-directed RNA polymerase subunit beta' (1057 aa).

The Zn(2+) site is built by Cys-60, Cys-62, Cys-75, and Cys-78. Mg(2+) is bound by residues Asp-449, Asp-451, and Asp-453. Zn(2+)-binding residues include Cys-822, Cys-896, Cys-903, and Cys-906.

It belongs to the RNA polymerase beta' chain family. The RNAP catalytic core consists of 2 alpha, 1 beta, 1 beta' and 1 omega subunit. When a sigma factor is associated with the core the holoenzyme is formed, which can initiate transcription. Mg(2+) serves as cofactor. It depends on Zn(2+) as a cofactor.

It catalyses the reaction RNA(n) + a ribonucleoside 5'-triphosphate = RNA(n+1) + diphosphate. Its function is as follows. DNA-dependent RNA polymerase catalyzes the transcription of DNA into RNA using the four ribonucleoside triphosphates as substrates. This Staphylococcus aureus protein is DNA-directed RNA polymerase subunit beta'.